A 149-amino-acid chain; its full sequence is H/ACA ribonucleoprotein complex subunit 2-like protein (149 aa).

This sequence belongs to the eukaryotic ribosomal protein eL8 family. As to quaternary structure, component of the small nucleolar ribonucleoprotein particle containing H/ACA-type snoRNAs (H/ACA snoRNPs). Component of the telomerase holoenzyme complex.

The protein resides in the nucleus. It is found in the nucleolus. Functionally, required for ribosome biogenesis. Part of a complex which catalyzes pseudouridylation of rRNA. This involves the isomerization of uridine such that the ribose is subsequently attached to C5, instead of the normal N1. Pseudouridine ('psi') residues may serve to stabilize the conformation of rRNAs. In Xenopus laevis (African clawed frog), this protein is H/ACA ribonucleoprotein complex subunit 2-like protein (nhp2).